Here is a 160-residue protein sequence, read N- to C-terminus: Protein-export protein SecB (160 aa).

Belongs to the SecB family. As to quaternary structure, homotetramer, a dimer of dimers. One homotetramer interacts with 1 SecA dimer.

It is found in the cytoplasm. One of the proteins required for the normal export of preproteins out of the cell cytoplasm. It is a molecular chaperone that binds to a subset of precursor proteins, maintaining them in a translocation-competent state. It also specifically binds to its receptor SecA. In Orientia tsutsugamushi (strain Boryong) (Rickettsia tsutsugamushi), this protein is Protein-export protein SecB.